The following is a 297-amino-acid chain: Homoserine kinase (297 aa).

Residue P82–S92 coordinates ATP.

The protein belongs to the GHMP kinase family. Homoserine kinase subfamily.

The protein resides in the cytoplasm. It catalyses the reaction L-homoserine + ATP = O-phospho-L-homoserine + ADP + H(+). The protein operates within amino-acid biosynthesis; L-threonine biosynthesis; L-threonine from L-aspartate: step 4/5. Functionally, catalyzes the ATP-dependent phosphorylation of L-homoserine to L-homoserine phosphate. The chain is Homoserine kinase from Bacillus cereus (strain B4264).